Here is a 167-residue protein sequence, read N- to C-terminus: Zymogen granule membrane protein 16 (167 aa).

Positions 1 to 16 (MLAIALLVLLCASASA) are cleaved as a signal peptide. Residues 24 to 159 (SSYSGEYGGK…IDAISLHWDT (136 aa)) enclose the Jacalin-type lectin domain.

Belongs to the jacalin lectin family. Expressed in pancreas, colon, duodenum, and much less in stomach.

It is found in the secreted. It localises to the extracellular space. The protein resides in the extracellular matrix. Its subcellular location is the zymogen granule lumen. The protein localises to the golgi apparatus lumen. Functionally, may play a role in protein trafficking. May act as a linker molecule between the submembranous matrix on the luminal side of zymogen granule membrane (ZGM) and aggregated secretory proteins during granule formation in the TGN. The polypeptide is Zymogen granule membrane protein 16 (Zg16) (Rattus norvegicus (Rat)).